A 730-amino-acid chain; its full sequence is MPALGCCVDAAVSPPPGYSFLWDSSLPAPEIFPSGVPLSTNTAATTTTTTHWSPAHSSALYSIDGWGAPYFTVNSSGDISVKPHGTETLPHQEIDLLKVVKKASDPKNSGGLGLQFPLVVRFPDILKNRLESLQSAFDYAVQSQGYEAHYQGVYPVKCNQDRFVVEDIVKFGSGFRFGLEAGSKPELLLAMSCLCKGSREGLLVCNGFKDADYISLALVARKLMLNTVIVLEQEEELDLVIDISRKMAVRPLIGLRAKLRTKHSGHFGSTSGEKGKFGLTTTQIVRVVKKLEESGMLDCLQLLHFHIGSQIPSTALLADGVGEAAQIYCELVRLGAGMKYIDCGGGLGIDYDGTKSCDSDCSVGYGLQEYASTVVQAVRFVCDRKNVKHPVICSESGRAIVSHHSVLIFEAVSSTTTRSQELSSVDLQSFVEKLNDDARADYRNLSAAAIRGEYDTCVLYADQLKQRCVEQFKDGNLDIEQLAAVDGICDFVSKAIGASDPVRTYHVNLSIFTSIPDFWAIDQLFPIVPIHKLDERPGVRGILSDLTCDSDGKIDKFIGGESSLPLHELGSNGGGDGGKYYLGMFLGGAYEEALGGLHNLFGGPSVLRVSQSDSPHSFAVTCAVPGPSCADVLRAMQHEPELMFETLKHRAEEFVHNDDEQEEDKGLAFASLASSLAQSFNNMPYLVTNSSCCLTATNNGGYYYCNDENIVGVGAESAAAEEELWPYCVA.

The N-terminal 37 residues, 1–37 (MPALGCCVDAAVSPPPGYSFLWDSSLPAPEIFPSGVP), are a transit peptide targeting the chloroplast. N6-(pyridoxal phosphate)lysine is present on K157. Pyridoxal 5'-phosphate-binding positions include S309, G346, and 395-398 (ESGR). 460–461 (YA) is a substrate binding site. C548 functions as the Proton donor; shared with dimeric partner in the catalytic mechanism. Residue D549 participates in substrate binding. Y590 is a pyridoxal 5'-phosphate binding site.

This sequence belongs to the Orn/Lys/Arg decarboxylase class-II family. SpeA subfamily. Mg(2+) is required as a cofactor. The cofactor is pyridoxal 5'-phosphate.

It localises to the plastid. It is found in the chloroplast. It carries out the reaction L-arginine + H(+) = agmatine + CO2. It functions in the pathway alkaloid biosynthesis; nicotine biosynthesis. The protein operates within amine and polyamine biosynthesis; agmatine biosynthesis; agmatine from L-arginine: step 1/1. Its function is as follows. Involved in the biosynthesis of pyridine alkaloid natural products, leading mainly to the production of anabasine, anatabine, nicotine and nornicotine, effective deterrents against herbivores with antiparasitic and pesticide properties (neurotoxins); nornicotine serves as the precursor in the synthesis of the carcinogen compound N'-nitrosonornicotine (NNN). Required for the biosynthesis of putrescine. Catalyzes the first step of polyamine (PA) biosynthesis to produce putrescine from arginine. The polypeptide is Arginine decarboxylase 1B, chloroplastic (Nicotiana tabacum (Common tobacco)).